Consider the following 28-residue polypeptide: NGLCCSQYGFCGTTSAYCSRANGCQSNC.

Residues 1-28 (NGLCCSQYGFCGTTSAYCSRANGCQSNC) form the Chitin-binding type-1 domain. 2 cysteine pairs are disulfide-bonded: Cys4–Cys18 and Cys24–Cys28.

In terms of tissue distribution, seeds (at protein level).

In terms of biological role, chitin-binding protein which functions in defense against chitin-containing fungal pathogens. The chain is Morintide mO6 from Moringa oleifera (Horseradish tree).